The chain runs to 293 residues: MNKDLKGLYAALLVPFDENGQVNEQGLKQIAQNAIETEELDGLYVNGSSGENFLLNTEQKKQVFKVAKEAVGDKVKLIAQVGSLDLNEAIELGKYATELGYDALSAVTPFYYPFTFEEIRDYYFDIIEATQNNMIIYAIPDLTGVNISIEQFSELFNHEKIVGVKYTAPNFFLLERIRKAFPDKLILSGFDEMLVQATISGVDGAIGSTYNVNGRRARKIFDLARQGQIQEAYQLQHDSNDIIETVLSMGIYPTLKEILRHRGIDAGLPKRPFKPFNEAHRQTLDQLIAKYDL.

Positions 48 and 49 each coordinate aceneuramate. Tyr137 functions as the Proton donor in the catalytic mechanism. The Schiff-base intermediate with substrate role is filled by Lys165. Aceneuramate is bound by residues Thr167, Gly189, Asp191, Glu192, and Ser208.

The protein belongs to the DapA family. NanA subfamily. As to quaternary structure, homotetramer.

It localises to the cytoplasm. It catalyses the reaction aceneuramate = aldehydo-N-acetyl-D-mannosamine + pyruvate. The protein operates within amino-sugar metabolism; N-acetylneuraminate degradation; D-fructose 6-phosphate from N-acetylneuraminate: step 1/5. Functionally, catalyzes the reversible aldol cleavage of N-acetylneuraminic acid (sialic acid; Neu5Ac) to form pyruvate and N-acetylmannosamine (ManNAc) via a Schiff base intermediate. The protein is N-acetylneuraminate lyase of Staphylococcus aureus (strain MRSA252).